The primary structure comprises 336 residues: Biotin synthase (336 aa).

Residues 36–263 form the Radical SAM core domain; the sequence is TKVQISTLLS…ESHVRLAAGR (228 aa). Residues C51, C55, and C58 each coordinate [4Fe-4S] cluster. [2Fe-2S] cluster contacts are provided by C95, C126, C186, and R258.

Belongs to the radical SAM superfamily. Biotin synthase family. Homodimer. It depends on [4Fe-4S] cluster as a cofactor. [2Fe-2S] cluster is required as a cofactor.

It carries out the reaction (4R,5S)-dethiobiotin + (sulfur carrier)-SH + 2 reduced [2Fe-2S]-[ferredoxin] + 2 S-adenosyl-L-methionine = (sulfur carrier)-H + biotin + 2 5'-deoxyadenosine + 2 L-methionine + 2 oxidized [2Fe-2S]-[ferredoxin]. Its pathway is cofactor biosynthesis; biotin biosynthesis; biotin from 7,8-diaminononanoate: step 2/2. Its function is as follows. Catalyzes the conversion of dethiobiotin (DTB) to biotin by the insertion of a sulfur atom into dethiobiotin via a radical-based mechanism. The chain is Biotin synthase from Gluconobacter oxydans (strain 621H) (Gluconobacter suboxydans).